A 119-amino-acid polypeptide reads, in one-letter code: Protein TusC (119 aa).

This sequence belongs to the DsrF/TusC family. Heterohexamer, formed by a dimer of trimers. The hexameric TusBCD complex contains 2 copies each of TusB, TusC and TusD. The TusBCD complex interacts with TusE.

It localises to the cytoplasm. Its function is as follows. Part of a sulfur-relay system required for 2-thiolation of 5-methylaminomethyl-2-thiouridine (mnm(5)s(2)U) at tRNA wobble positions. The chain is Protein TusC from Shigella sonnei (strain Ss046).